We begin with the raw amino-acid sequence, 299 residues long: Coenzyme PQQ synthesis protein B (299 aa).

Belongs to the PqqB family.

It participates in cofactor biosynthesis; pyrroloquinoline quinone biosynthesis. May be involved in the transport of PQQ or its precursor to the periplasm. This is Coenzyme PQQ synthesis protein B from Methylobacterium nodulans (strain LMG 21967 / CNCM I-2342 / ORS 2060).